The following is a 78-amino-acid chain: MKTLLLTFLVVTIVCLDLGYTLICHQLHGLQTCEPAQKFCQKRTTMFSPNHPVLLMGCTYNCPTERYSVCCSTDKCNK.

The first 21 residues, 1-21 (MKTLLLTFLVVTIVCLDLGYT), serve as a signal peptide directing secretion. 4 disulfides stabilise this stretch: Cys-24–Cys-40, Cys-33–Cys-58, Cys-62–Cys-70, and Cys-71–Cys-76.

The protein belongs to the three-finger toxin family. Short-chain subfamily. Expressed by the venom gland.

Its subcellular location is the secreted. Functionally, this three-finger toxin binds and inhibits the nicotinic acetylcholine receptor (nAChR). The chain is Short neurotoxin SNTX6 from Ophiophagus hannah (King cobra).